The chain runs to 412 residues: Serine hydroxymethyltransferase (412 aa).

(6S)-5,6,7,8-tetrahydrofolate is bound by residues L120 and 124-126 (GHL). At K229 the chain carries N6-(pyridoxal phosphate)lysine. 352-354 (SPF) is a binding site for (6S)-5,6,7,8-tetrahydrofolate.

It belongs to the SHMT family. As to quaternary structure, homodimer. Pyridoxal 5'-phosphate serves as cofactor.

It localises to the cytoplasm. It carries out the reaction (6R)-5,10-methylene-5,6,7,8-tetrahydrofolate + glycine + H2O = (6S)-5,6,7,8-tetrahydrofolate + L-serine. Its pathway is one-carbon metabolism; tetrahydrofolate interconversion. It functions in the pathway amino-acid biosynthesis; glycine biosynthesis; glycine from L-serine: step 1/1. Catalyzes the reversible interconversion of serine and glycine with tetrahydrofolate (THF) serving as the one-carbon carrier. This reaction serves as the major source of one-carbon groups required for the biosynthesis of purines, thymidylate, methionine, and other important biomolecules. Also exhibits THF-independent aldolase activity toward beta-hydroxyamino acids, producing glycine and aldehydes, via a retro-aldol mechanism. In Ruminiclostridium cellulolyticum (strain ATCC 35319 / DSM 5812 / JCM 6584 / H10) (Clostridium cellulolyticum), this protein is Serine hydroxymethyltransferase.